The primary structure comprises 376 residues: N-acetyldiaminopimelate deacetylase (376 aa).

Residue aspartate 69 is part of the active site. Glutamate 128 (proton acceptor) is an active-site residue.

This sequence belongs to the peptidase M20A family. N-acetyldiaminopimelate deacetylase subfamily.

It catalyses the reaction N-acetyl-(2S,6S)-2,6-diaminopimelate + H2O = (2S,6S)-2,6-diaminopimelate + acetate. Its pathway is amino-acid biosynthesis; L-lysine biosynthesis via DAP pathway; LL-2,6-diaminopimelate from (S)-tetrahydrodipicolinate (acetylase route): step 3/3. Catalyzes the conversion of N-acetyl-diaminopimelate to diaminopimelate and acetate. In Streptococcus pneumoniae (strain P1031), this protein is N-acetyldiaminopimelate deacetylase.